The sequence spans 139 residues: Ubiquitin-conjugating enzyme spm2 (139 aa).

Positions 5-139 (PRNFKLLEEL…PQPPEGSTFF (135 aa)) constitute a UBC core domain.

Belongs to the ubiquitin-conjugating enzyme family. As to quaternary structure, heterodimer with ubc13.

Functionally, has a role in the DNA error-free postreplication repair (PRR) pathway. Lacks catalytic activity by itself. The ubc13/spm2 heterodimer catalyzes the synthesis of non-canonical poly-ubiquitin chains that are linked through 'Lys-63'. This Schizosaccharomyces pombe (strain 972 / ATCC 24843) (Fission yeast) protein is Ubiquitin-conjugating enzyme spm2 (spm2).